Here is a 657-residue protein sequence, read N- to C-terminus: Endoplasmic reticulum chaperone BiP homolog (657 aa).

The first 17 residues, 1-17, serve as a signal peptide directing secretion; sequence MKVFSLILIAFVANAYC. ATP contacts are provided by residues 38–41, K99, 229–231, 295–302, and 366–369; these read GTTY, GGT, EKAKRALS, and GSTR. The interval 128–282 is nucleotide-binding (NBD); sequence KPNVEVKVGS…KKKSGKDLRK (155 aa). Residues 402–502 form a substrate-binding (SBD) region; the sequence is VQAGVIGGVE…PRGVPQIEVT (101 aa). The tract at residues 607-657 is disordered; sequence LGSNQDASTEENKEQKKELESVVQPIVSKLYSAGGQGEQASEEPSEDHDEL. A compositionally biased stretch (basic and acidic residues) spans 616–626; that stretch reads EENKEQKKELE. Positions 646–657 are enriched in acidic residues; that stretch reads ASEEPSEDHDEL. The Prevents secretion from ER signature appears at 654–657; sequence HDEL.

This sequence belongs to the heat shock protein 70 family.

Its subcellular location is the endoplasmic reticulum lumen. The catalysed reaction is ATP + H2O = ADP + phosphate + H(+). With respect to regulation, the chaperone activity is regulated by ATP-induced allosteric coupling of the nucleotide-binding (NBD) and substrate-binding (SBD) domains. In the ADP-bound and nucleotide-free (apo) states, the two domains have little interaction. In contrast, in the ATP-bound state the two domains are tightly coupled, which results in drastically accelerated kinetics in both binding and release of polypeptide substrates. J domain-containing co-chaperones stimulate the ATPase activity and are required for efficient substrate recognition. Its function is as follows. Endoplasmic reticulum chaperone that plays a key role in protein folding and quality control in the endoplasmic reticulum lumen. Required for ER dynamics during the first embryonic cell divisions. Specifically, controls ER transition into sheet-like structures at the onset of mitosis, possibly by regulating homotypic membrane fusion. The protein is Endoplasmic reticulum chaperone BiP homolog (hsp-4) of Caenorhabditis elegans.